Reading from the N-terminus, the 173-residue chain is MTEEEKTKSEAEEIEQNNKEEEQEKSVEELLEEKEQEIQQYKDKLQRIHADFENFKKRSIKEKQEFVKFANEGLILKVLEAYEDLERALEVKEDKNLREGVELIYKKLTKILEDEGVEPIETKNQKFDPYKHEALMTEDNDDYENNEIIQDLQKGYTLNSKVIRYSKVKVCKK.

The span at 1-28 (MTEEEKTKSEAEEIEQNNKEEEQEKSVE) shows a compositional bias: basic and acidic residues. Positions 1–30 (MTEEEKTKSEAEEIEQNNKEEEQEKSVEEL) are disordered.

Belongs to the GrpE family. In terms of assembly, homodimer.

The protein resides in the cytoplasm. Its function is as follows. Participates actively in the response to hyperosmotic and heat shock by preventing the aggregation of stress-denatured proteins, in association with DnaK and GrpE. It is the nucleotide exchange factor for DnaK and may function as a thermosensor. Unfolded proteins bind initially to DnaJ; upon interaction with the DnaJ-bound protein, DnaK hydrolyzes its bound ATP, resulting in the formation of a stable complex. GrpE releases ADP from DnaK; ATP binding to DnaK triggers the release of the substrate protein, thus completing the reaction cycle. Several rounds of ATP-dependent interactions between DnaJ, DnaK and GrpE are required for fully efficient folding. This is Protein GrpE from Methanosphaera stadtmanae (strain ATCC 43021 / DSM 3091 / JCM 11832 / MCB-3).